We begin with the raw amino-acid sequence, 283 residues long: Phospholipase C (283 aa).

Positions 1-24 are cleaved as a signal peptide; the sequence is MKKKVLALAAAITVVAPLQSVAFA. The propeptide occupies 25 to 38; sequence HENDGGSKIKIVHR. Zn(2+) contacts are provided by Trp-39, His-52, Asp-93, His-107, His-156, Asp-160, His-166, His-180, and Glu-184. The Zn-dependent PLC domain maps to 39–283; that stretch reads WSAEDKHKEG…QLWFDTYGDR (245 aa).

Belongs to the bacterial zinc-metallophospholipase C family. In terms of assembly, monomer. The cofactor is Zn(2+).

The catalysed reaction is a 1,2-diacyl-sn-glycero-3-phosphocholine + H2O = phosphocholine + a 1,2-diacyl-sn-glycerol + H(+). In terms of biological role, required, with sphingomyelinase, to effect target cell lysis (hemolysis). The chain is Phospholipase C (plc) from Bacillus cereus.